The primary structure comprises 182 residues: Adenine phosphoribosyltransferase (182 aa).

This sequence belongs to the purine/pyrimidine phosphoribosyltransferase family. As to quaternary structure, homodimer.

The protein resides in the cytoplasm. It catalyses the reaction AMP + diphosphate = 5-phospho-alpha-D-ribose 1-diphosphate + adenine. It participates in purine metabolism; AMP biosynthesis via salvage pathway; AMP from adenine: step 1/1. Its function is as follows. Catalyzes a salvage reaction resulting in the formation of AMP, that is energically less costly than de novo synthesis. The polypeptide is Adenine phosphoribosyltransferase (Campylobacter jejuni subsp. jejuni serotype O:23/36 (strain 81-176)).